The chain runs to 384 residues: Putative glutamate--cysteine ligase 2 (384 aa).

This sequence belongs to the glutamate--cysteine ligase type 2 family. YbdK subfamily.

The enzyme catalyses L-cysteine + L-glutamate + ATP = gamma-L-glutamyl-L-cysteine + ADP + phosphate + H(+). In terms of biological role, ATP-dependent carboxylate-amine ligase which exhibits weak glutamate--cysteine ligase activity. This Ruegeria pomeroyi (strain ATCC 700808 / DSM 15171 / DSS-3) (Silicibacter pomeroyi) protein is Putative glutamate--cysteine ligase 2.